A 440-amino-acid chain; its full sequence is Doublesex- and mab-3-related transcription factor A2 (440 aa).

The segment at residues 59–106 (CARCRNHGVVSALKGHKRYCRWKDCMCAKCTLIAERQRVMAAQVALRR) is a DNA-binding region (DM). Residues 167–261 (PKTPLPGTVT…SPSSAASRQM (95 aa)) form a disordered region. Residues 199 to 213 (DMRHGSGSENGDRES) are compositionally biased toward basic and acidic residues. A compositionally biased stretch (low complexity) spans 229–241 (TPGSISPIGSDSG). Polar residues predominate over residues 251–261 (PSPSSAASRQM). The region spanning 261-296 (MNAIDILTRVFPNHKRSVLELVLQGCGKNVVQAIEQ) is the DMA domain.

The protein belongs to the DMRT family. Restrictively expressed in brain and developing germ cells, especially in spermatogonia, spermatocytes, spermatids, and sperm cells, and in developing oocytes, including early perinucleolus stage oocyte, late yolk vesicle stage oocyte, and oil drop stage oocyte.

It is found in the nucleus. Functionally, may be involved in sexual development. The sequence is that of Doublesex- and mab-3-related transcription factor A2 (dmrta2) from Danio rerio (Zebrafish).